The following is a 177-amino-acid chain: Large ribosomal subunit protein uL6 (177 aa).

The protein belongs to the universal ribosomal protein uL6 family. In terms of assembly, part of the 50S ribosomal subunit.

Functionally, this protein binds to the 23S rRNA, and is important in its secondary structure. It is located near the subunit interface in the base of the L7/L12 stalk, and near the tRNA binding site of the peptidyltransferase center. This chain is Large ribosomal subunit protein uL6, found in Shewanella denitrificans (strain OS217 / ATCC BAA-1090 / DSM 15013).